Consider the following 380-residue polypeptide: cAMP-dependent protein kinase type I-alpha regulatory subunit (380 aa).

At Met1 the chain carries N-acetylmethionine. The residue at position 2 (Ala2) is an N-acetylalanine; in cAMP-dependent protein kinase type I-alpha regulatory subunit, N-terminally processed. The interval 2–135 (ASGSTASEEE…ALAKAIEKNV (134 aa)) is dimerization and phosphorylation. Ser3, Ser76, and Ser82 each carry phosphoserine. The tract at residues 64 to 96 (IQNLQKASARADSREDEISPPPPNPVVKGRRRR) is disordered. The Pseudophosphorylation motif signature appears at 95–99 (RRGAI). The residue at position 100 (Ser100) is a Phosphoserine. 3',5'-cyclic AMP contacts are provided by residues 136 to 253 (LFSH…SKVS), Glu201, Arg210, 254 to 380 (ILES…SLSV), Glu325, and Arg334. The residue at position 257 (Ser257) is a Phosphoserine.

This sequence belongs to the cAMP-dependent kinase regulatory chain family. As to quaternary structure, the inactive holoenzyme is composed of two regulatory chains and two catalytic chains. Activation by cAMP releases the two active catalytic monomers and the regulatory dimer. Interacts with PRKACA and PRKACB. PRKAR1A also interacts with RFC2; the complex may be involved in cell survival. Interacts with AKAP4. Interacts with RARA; the interaction occurs in the presence of cAMP or FSH and regulates RARA transcriptional activity. Interacts with the phosphorylated form of PJA2. Interacts with CBFA2T3. Interacts with PRKX; regulates this cAMP-dependent protein kinase. Interacts with smAKAP; this interaction may target PRKAR1A to the plasma membrane. Interacts with AICDA. Post-translationally, the pseudophosphorylation site binds to the substrate-binding region of the catalytic chain, resulting in the inhibition of its activity. In terms of tissue distribution, four types of regulatory chains are found: I-alpha, I-beta, II-alpha, and II-beta. Their expression varies among tissues and is in some cases constitutive and in others inducible.

It is found in the cell membrane. In terms of biological role, regulatory subunit of the cAMP-dependent protein kinases involved in cAMP signaling in cells. The polypeptide is cAMP-dependent protein kinase type I-alpha regulatory subunit (PRKAR1A) (Sus scrofa (Pig)).